We begin with the raw amino-acid sequence, 119 residues long: Large ribosomal subunit protein bL20c (119 aa).

This sequence belongs to the bacterial ribosomal protein bL20 family.

The protein localises to the plastid. It localises to the chloroplast. In terms of biological role, binds directly to 23S ribosomal RNA and is necessary for the in vitro assembly process of the 50S ribosomal subunit. It is not involved in the protein synthesizing functions of that subunit. The sequence is that of Large ribosomal subunit protein bL20c from Triticum aestivum (Wheat).